Here is a 349-residue protein sequence, read N- to C-terminus: GDSL esterase/lipase At1g58725 (349 aa).

A signal peptide spans 1 to 19; that stretch reads MKIQILLFALVLIFVEANA. Asparagine 25 is a glycosylation site (N-linked (GlcNAc...) asparagine). The active-site Nucleophile is serine 37. Residue asparagine 316 is glycosylated (N-linked (GlcNAc...) asparagine). Residues aspartate 324 and histidine 327 contribute to the active site.

It belongs to the 'GDSL' lipolytic enzyme family.

It localises to the secreted. This chain is GDSL esterase/lipase At1g58725, found in Arabidopsis thaliana (Mouse-ear cress).